Here is a 370-residue protein sequence, read N- to C-terminus: 5-hydroxytryptamine receptor 5B (370 aa).

The segment at 1-36 (MEVSNLSGATPGLAFPPGPESCSDSPSSGRSMGSTP) is disordered. Residues 1 to 48 (MEVSNLSGATPGLAFPPGPESCSDSPSSGRSMGSTPGGLILPGREPPF) are Extracellular-facing. N-linked (GlcNAc...) asparagine glycosylation occurs at asparagine 5. A compositionally biased stretch (low complexity) spans 20-36 (ESCSDSPSSGRSMGSTP). A helical membrane pass occupies residues 49–75 (SAFTVLVVTLLVLLIAATFLWNLLVLV). Residues 76–88 (TILRVRAFHRVPH) lie on the Cytoplasmic side of the membrane. The chain crosses the membrane as a helical span at residues 89–115 (NLVASTAVSDVLVAVLVMPLSLVSELS). At 116-127 (AGRRWQLGRSLC) the chain is on the extracellular side. Cysteine 127 and cysteine 205 form a disulfide bridge. The chain crosses the membrane as a helical span at residues 128–150 (HVWISFDVLCCTASIWNVAAIAL). Aspartate 134 contributes to the serotonin binding site. Over 151–168 (DRYWTITRHLQYTLRTRS) the chain is Cytoplasmic. A helical membrane pass occupies residues 169 to 189 (RASALMIAITWALSALIALAP). Topologically, residues 190 to 211 (LLFGWGEAYDARLQRCQVSQEP) are extracellular. Residues 212 to 233 (SYAVFSTCGAFYLPLAVVLFVY) form a helical membrane-spanning segment. Over 234–300 (WKIYKAAKFR…QKEKRAAMMV (67 aa)) the chain is Cytoplasmic. A helical transmembrane segment spans residues 301 to 325 (GILIGVFVLCWIPFFLTELISPLCA). The Extracellular portion of the chain corresponds to 326–327 (CS). The helical transmembrane segment at 328-352 (LPPIWKSIFLWLGYSNSFFNPLIYT) threads the bilayer. At 353-370 (AFNKNYNNAFKSLFTKQR) the chain is on the cytoplasmic side.

This sequence belongs to the G-protein coupled receptor 1 family. As to expression, expressed predominantly in the central nervous system; in the hippocampus, habenula, and the doral raphe.

Its subcellular location is the cell membrane. Its function is as follows. G-protein coupled receptor for 5-hydroxytryptamine (serotonin), a biogenic hormone that functions as a neurotransmitter, a hormone and a mitogen. Also functions as a receptor for ergot alkaloid derivatives and other psychoactive substances. Ligand binding causes a conformation change that triggers signaling via guanine nucleotide-binding proteins (G proteins) and modulates the activity of downstream effectors. Htr5b is coupled to G(i)/G(o) G alpha proteins and mediates inhibitory neurotransmission: signaling inhibits adenylate cyclase activity and activates a phosphatidylinositol-calcium second messenger system that regulates the release of Ca(2+) ions from intracellular stores. The chain is 5-hydroxytryptamine receptor 5B from Mus musculus (Mouse).